Here is a 557-residue protein sequence, read N- to C-terminus: Putative sensory transducer protein (557 aa).

Residues 122-145 (TASTVMIVVIFVGILIAIALGVFI) form a helical membrane-spanning segment. One can recognise an HAMP domain in the interval 147-199 (RIISKPIGQMVEAADRLALGDVEVDVKAETRDEIGKLAESFKRMIENIREQAY). The Methyl-accepting transducer domain maps to 243–472 (VAAQVAAGAK…ESAAASEELS (230 aa)). Glutamine 268 carries the glutamate methyl ester (Gln) modification. A Glutamate methyl ester (Glu) modification is found at glutamate 274. Residue glutamine 281 is modified to Glutamate methyl ester (Gln). Glutamate 463 is modified (glutamate methyl ester (Glu)). Over residues 511–541 (DYTENKQPKSYSKEENGEYSDGKETAEKDVG) the composition is skewed to basic and acidic residues. Residues 511–542 (DYTENKQPKSYSKEENGEYSDGKETAEKDVGG) form a disordered region.

It belongs to the methyl-accepting chemotaxis (MCP) protein family.

Its subcellular location is the cell membrane. May bind attractants or detect changes in the extracellular concentration of soluble sugars. The polypeptide is Putative sensory transducer protein (Acetivibrio thermocellus (strain ATCC 27405 / DSM 1237 / JCM 9322 / NBRC 103400 / NCIMB 10682 / NRRL B-4536 / VPI 7372) (Clostridium thermocellum)).